The following is a 907-amino-acid chain: Interference hedgehog (907 aa).

Positions 1–23 (MSLTRRFSLTLLLLLPLLTSLLA) are cleaved as a signal peptide. Topologically, residues 24-709 (AIPVLQANLS…SHNETFNMNP (686 aa)) are extracellular. Ig-like C2-type domains follow at residues 42–149 (PGVR…ASIS), 152–233 (GADT…VRLA), 252–340 (PALL…FIEL), and 346–433 (PRIL…LQVN). Intrachain disulfides connect Cys-65–Cys-127, Cys-173–Cys-221, and Cys-276–Cys-324. N-linked (GlcNAc...) asparagine glycans are attached at residues Asn-101, Asn-203, Asn-300, and Asn-355. Cys-367 and Cys-415 are joined by a disulfide. The segment at 427–474 (GTLLQVNPKQLPDGEGTGMDSGRSSARPTHSRKQKQQTQMVPPSAPNV) is disordered. Positions 462–474 (QQTQMVPPSAPNV) are enriched in polar residues. Fibronectin type-III domains are found at residues 468–578 (PPSA…LQRG) and 586–681 (VPEL…TQRP). A glycan (N-linked (GlcNAc...) asparagine) is linked at Asn-473. Positions 504, 511, and 513 each coordinate heparin. Residues Asn-537 and Asn-548 are each glycosylated (N-linked (GlcNAc...) asparagine). Arg-552 contributes to the heparin binding site. An N-linked (GlcNAc...) asparagine glycan is attached at Asn-568. Residues 676 to 688 (GRTQRPRASSTPQ) are compositionally biased toward polar residues. Residues 676–701 (GRTQRPRASSTPQPVLHAVDTTTPSH) form a disordered region. Asn-702 carries N-linked (GlcNAc...) asparagine glycosylation. A helical membrane pass occupies residues 710 to 730 (MLTGTIGGGALLVLLVISACL). Residues 731–907 (CLCRRRSSRG…SSGSLNSVGV (177 aa)) lie on the Cytoplasmic side of the membrane. 2 disordered regions span residues 780-805 (AQQQ…QDND) and 829-881 (MSSS…NKPG). Low complexity-rich tracts occupy residues 781-794 (QQQQ…LQQQ) and 853-863 (NNNNLNQPGDG). Positions 865 to 878 (LANSADSPRLQASN) are enriched in polar residues.

Belongs to the immunoglobulin superfamily. IHOG family. Homodimer. Heterotetramer; 2 iHog chains bind 2 hh chains when facilitated by heparin, heparin is required to promote high-affinity interactions between hh and iHog.

The protein resides in the membrane. Functionally, mediates response to the active Hedgehog (Hh) protein signal in embryos, functioning upstream or at the level of patched (ptc). This Drosophila virilis (Fruit fly) protein is Interference hedgehog.